Here is a 382-residue protein sequence, read N- to C-terminus: Sialidase (382 aa).

Arg-37 is a binding site for substrate. The active-site Proton acceptor is the Asp-62. 3 BNR repeats span residues 71 to 82 (ARSTDFGKTWSY), 140 to 151 (IYSDDNGLTWSN), and 208 to 219 (IYSKDNGETWTM). Arg-245 contacts substrate. A BNR 4 repeat occupies 255 to 266 (YISHDLGTTWEI). The active-site Nucleophile is the Tyr-347.

This sequence belongs to the glycosyl hydrolase 33 family.

It localises to the secreted. It catalyses the reaction Hydrolysis of alpha-(2-&gt;3)-, alpha-(2-&gt;6)-, alpha-(2-&gt;8)- glycosidic linkages of terminal sialic acid residues in oligosaccharides, glycoproteins, glycolipids, colominic acid and synthetic substrates.. Sialidases have been suggested to be pathogenic factors in microbial infections. The protein is Sialidase (nanH) of Clostridium perfringens.